A 439-amino-acid chain; its full sequence is L-cysteine:1D-myo-inositol 2-amino-2-deoxy-alpha-D-glucopyranoside ligase 2 (439 aa).

Cys-60 contacts Zn(2+). Residues 60–63, Thr-75, and 98–100 each bind L-cysteinyl-5'-AMP; these read CGIT and NVT. The short motif at 62-72 is the 'HIGH' region element; sequence ITPYDSTHLGH. The 'ERGGDP' region signature appears at 203 to 208; sequence ERGGDP. Trp-243 serves as a coordination point for L-cysteinyl-5'-AMP. Cys-247 contributes to the Zn(2+) binding site. L-cysteinyl-5'-AMP is bound at residue 265-267; sequence GVD. His-272 is a Zn(2+) binding site. Ile-299 is an L-cysteinyl-5'-AMP binding site. The 'KMSKS' region signature appears at 305–309; that stretch reads KMSKS.

This sequence belongs to the class-I aminoacyl-tRNA synthetase family. MshC subfamily. Monomer. Zn(2+) is required as a cofactor.

The catalysed reaction is 1D-myo-inositol 2-amino-2-deoxy-alpha-D-glucopyranoside + L-cysteine + ATP = 1D-myo-inositol 2-(L-cysteinylamino)-2-deoxy-alpha-D-glucopyranoside + AMP + diphosphate + H(+). Its function is as follows. Catalyzes the ATP-dependent condensation of GlcN-Ins and L-cysteine to form L-Cys-GlcN-Ins. The chain is L-cysteine:1D-myo-inositol 2-amino-2-deoxy-alpha-D-glucopyranoside ligase 2 from Corynebacterium urealyticum (strain ATCC 43042 / DSM 7109).